The sequence spans 905 residues: Cadherin-2B (905 aa).

The N-terminal stretch at 1 to 28 is a signal peptide; the sequence is MCRKQPFLLPTLLGILAALMLQQGPVEA. The propeptide occupies 29–160; it reads FGGSRLCKTG…NSNGLQRQKR (132 aa). Cadherin domains follow at residues 161–268, 269–383, 384–498, 499–604, and 605–713; these read DWVI…RPEF, LHQI…PPEF, TAMT…NPYF, TPNP…DNAP, and YVYP…TTAP. Over 161–723 the chain is Extracellular; that stretch reads DWVIPPINVP…IIGTGLGTGA (563 aa). Glutamate 171 serves as a coordination point for Ca(2+). N-linked (GlcNAc...) asparagine glycosylation is present at asparagine 191. Aspartate 227, glutamate 229, aspartate 260, methionine 261, asparagine 262, aspartate 263, and asparagine 264 together coordinate Ca(2+). Asparagine 274 is a glycosylation site (N-linked (GlcNAc...) asparagine). The Ca(2+) site is built by aspartate 294, aspartate 296, and asparagine 302. N-linked (GlcNAc...) asparagine glycosylation is present at asparagine 326. Residue aspartate 354 coordinates Ca(2+). 5 N-linked (GlcNAc...) asparagine glycosylation sites follow: asparagine 403, asparagine 573, asparagine 623, asparagine 651, and asparagine 692. Residues 724–745 form a helical membrane-spanning segment; that stretch reads IIAILLCIIILLTLVLMFVVWM. At 746–905 the chain is on the cytoplasmic side; sequence KRRDKERQAK…LADMYGGSDD (160 aa). Disordered stretches follow at residues 774-800 and 862-883; these read EEGG…PDTI and SGST…EQDY. Acidic residues predominate over residues 775–784; the sequence is EGGGEEDQDY. Positions 862 to 879 are enriched in low complexity; that stretch reads SGSTAGSLSSLNSSSSGG.

As to quaternary structure, homodimer (via extracellular region). Can also form heterodimers with other cadherins (via extracellular region). Dimerization occurs in trans, i.e. with a cadherin chain from another cell.

The protein localises to the cell membrane. It localises to the sarcolemma. Its subcellular location is the cell junction. The protein resides in the cell surface. It is found in the desmosome. The protein localises to the adherens junction. Functionally, calcium-dependent cell adhesion protein; preferentially mediates homotypic cell-cell adhesion. Cadherins may thus contribute to the sorting of heterogeneous cell types, and thereby play an important role during embryonic development. Required for proper neurite branching. Required for pre- and postsynaptic organization. This is Cadherin-2B (cdh2-b) from Xenopus laevis (African clawed frog).